Reading from the N-terminus, the 610-residue chain is Elongation factor 4 (610 aa).

The region spanning 14 to 196 is the tr-type G domain; the sequence is NRIRNFSIIA…ALVANIPPPK (183 aa). Residues 26–31 and 143–146 each bind GTP; these read DHGKST and NKID.

It belongs to the TRAFAC class translation factor GTPase superfamily. Classic translation factor GTPase family. LepA subfamily.

It is found in the cell inner membrane. The catalysed reaction is GTP + H2O = GDP + phosphate + H(+). Required for accurate and efficient protein synthesis under certain stress conditions. May act as a fidelity factor of the translation reaction, by catalyzing a one-codon backward translocation of tRNAs on improperly translocated ribosomes. Back-translocation proceeds from a post-translocation (POST) complex to a pre-translocation (PRE) complex, thus giving elongation factor G a second chance to translocate the tRNAs correctly. Binds to ribosomes in a GTP-dependent manner. The sequence is that of Elongation factor 4 from Legionella pneumophila (strain Lens).